The following is a 749-amino-acid chain: Catalase-peroxidase 2 (749 aa).

Residues methionine 1 to alanine 27 form the signal peptide. A cross-link (tryptophyl-tyrosyl-methioninium (Trp-Tyr) (with M-255)) is located at residues tryptophan 107–tyrosine 229. The Proton acceptor role is filled by histidine 108. The segment at residues tyrosine 229–methionine 255 is a cross-link (tryptophyl-tyrosyl-methioninium (Tyr-Met) (with W-107)). Heme b is bound at residue histidine 270.

It belongs to the peroxidase family. Peroxidase/catalase subfamily. Homodimer or homotetramer. The cofactor is heme b. Post-translationally, formation of the three residue Trp-Tyr-Met cross-link is important for the catalase, but not the peroxidase activity of the enzyme.

It carries out the reaction H2O2 + AH2 = A + 2 H2O. The catalysed reaction is 2 H2O2 = O2 + 2 H2O. Its function is as follows. Bifunctional enzyme with both catalase and broad-spectrum peroxidase activity. The polypeptide is Catalase-peroxidase 2 (Legionella pneumophila subsp. pneumophila (strain Philadelphia 1 / ATCC 33152 / DSM 7513)).